The primary structure comprises 457 residues: Nuclear hormone receptor family member odr-7 (457 aa).

Disordered stretches follow at residues 57 to 95 (EQPN…DNDA) and 230 to 252 (KQES…LQQP). Residues 327 to 407 (LHDCQVCLST…IGMLPENVQH (81 aa)) constitute a DNA-binding region (nuclear receptor). 2 consecutive NR C4-type zinc fingers follow at residues 330-351 (CQVC…CAAC) and 367-395 (CKRN…MKRC). The tract at residues 435–457 (QPSGSAAQPITVSSSESPRHTTN) is disordered.

The protein belongs to the nuclear hormone receptor family. NR0 subfamily. As to quaternary structure, heterodimer with a partner that confers DNA binding capacity or a nuclear hormone receptor whose DNA binding it inhibits. In terms of tissue distribution, expressed predominantly in the AWA neurons.

Its subcellular location is the nucleus. It localises to the cytoplasm. It is found in the perinuclear region. Its function is as follows. Required for the function of one pair of chemosensory neurons called AWA neurons that are involved in chemotaxis to volatile odorants. Acts in a pathway that specifies olfactory neuronal fate. Regulates the transcription of olfactory signaling molecules such as odr-10 that specify AWA neuron identity and function. Represses the expression in AWA neurons of factors such as str-2 which specify AWC neuron identity. The sequence is that of Nuclear hormone receptor family member odr-7 (odr-7) from Caenorhabditis elegans.